The chain runs to 901 residues: ABC transporter A family member 8 (901 aa).

The next 7 helical transmembrane spans lie at 34 to 54, 315 to 335, 369 to 389, 402 to 422, 427 to 447, 460 to 477, and 508 to 528; these read LITIPFFLCLLLLVIQMLFDT, IASLIGPLFFTWVILLLFPVI, FLLISILYMLCFAIFGSLIGL, VFFFICINLQISVAFLASAMF, TATVIAYIYVFGTGLLGIFLF, WIIAMELYPGFSLYRGLY, and CIMLIEWLLLLGLAYYIDQII. Positions 586-823 constitute an ABC transporter domain; that stretch reads VLCNNLKKVY…YGGSYVLTVT (238 aa). Residue 624 to 631 coordinates ATP; it reads GPNGAGKT.

The protein belongs to the ABC transporter superfamily. ABCA family. CPR flippase (TC 3.A.1.211) subfamily.

It localises to the membrane. This is ABC transporter A family member 8 (ABCA8) from Arabidopsis thaliana (Mouse-ear cress).